A 545-amino-acid polypeptide reads, in one-letter code: Glucose-6-phosphate isomerase (545 aa).

E351 acts as the Proton donor in catalysis. Residues H382 and K510 contribute to the active site.

It belongs to the GPI family.

Its subcellular location is the cytoplasm. The catalysed reaction is alpha-D-glucose 6-phosphate = beta-D-fructose 6-phosphate. It functions in the pathway carbohydrate biosynthesis; gluconeogenesis. Its pathway is carbohydrate degradation; glycolysis; D-glyceraldehyde 3-phosphate and glycerone phosphate from D-glucose: step 2/4. Its function is as follows. Catalyzes the reversible isomerization of glucose-6-phosphate to fructose-6-phosphate. The chain is Glucose-6-phosphate isomerase from Helicobacter pylori (strain P12).